The primary structure comprises 469 residues: 3-isopropylmalate dehydratase large subunit (469 aa).

Positions 350, 410, and 413 each coordinate [4Fe-4S] cluster.

This sequence belongs to the aconitase/IPM isomerase family. LeuC type 1 subfamily. In terms of assembly, heterodimer of LeuC and LeuD. It depends on [4Fe-4S] cluster as a cofactor.

The enzyme catalyses (2R,3S)-3-isopropylmalate = (2S)-2-isopropylmalate. It participates in amino-acid biosynthesis; L-leucine biosynthesis; L-leucine from 3-methyl-2-oxobutanoate: step 2/4. Functionally, catalyzes the isomerization between 2-isopropylmalate and 3-isopropylmalate, via the formation of 2-isopropylmaleate. The sequence is that of 3-isopropylmalate dehydratase large subunit from Brucella anthropi (strain ATCC 49188 / DSM 6882 / CCUG 24695 / JCM 21032 / LMG 3331 / NBRC 15819 / NCTC 12168 / Alc 37) (Ochrobactrum anthropi).